A 414-amino-acid chain; its full sequence is WD repeat-containing protein jip5 (414 aa).

WD repeat units follow at residues 9-48, 73-112, 118-159, 222-263, and 319-356; these read PLSADLFSQALHPKEPIVSVGLSTGHVQTFRLPSEESDTD, RHKGSCRCLGFGVDGEMLYSAGTDGLVKAAKAETGVVENK, AKDG…SPVS, VSSV…DQDE, and DETEGVIGLGFDVEGRMVSGGGQVVKVWHEAVDSDGMD. The interval 39-65 is disordered; it reads RLPSEESDTDGDGAESTSSSRNGKGHI. The interval 352–414 is disordered; it reads SDGMDGDMAG…QDIMGFADID (63 aa). Residues 369-383 are compositionally biased toward acidic residues; it reads DSDDSDDGDDSDDSD.

Belongs to the WD repeat WDR55 family.

The protein localises to the nucleus. Its subcellular location is the nucleolus. This chain is WD repeat-containing protein jip5 (jip5), found in Neosartorya fischeri (strain ATCC 1020 / DSM 3700 / CBS 544.65 / FGSC A1164 / JCM 1740 / NRRL 181 / WB 181) (Aspergillus fischerianus).